Reading from the N-terminus, the 156-residue chain is uncharacterized protein (156 aa).

The N-terminal stretch at 1-18 (MKKLLSIFLMAFSLNAFA) is a signal peptide. The Thioredoxin domain occupies 19–156 (QTNLADVQLK…AEQIRVFAEK (138 aa)). A disulfide bond links cysteine 54 and cysteine 57.

The protein belongs to the thioredoxin family.

This is an uncharacterized protein from Haemophilus influenzae (strain ATCC 51907 / DSM 11121 / KW20 / Rd).